The primary structure comprises 733 residues: Catalase-peroxidase (733 aa).

The tryptophyl-tyrosyl-methioninium (Trp-Tyr) (with M-245) cross-link spans 96-219 (WHSAGTYRTG…LAAVQMGLIY (124 aa)). Residue His-97 is the Proton acceptor of the active site. Positions 219–245 (YVNPEGPNGNPDPLAAAKDIRETFARM) form a cross-link, tryptophyl-tyrosyl-methioninium (Tyr-Met) (with W-96). His-260 lines the heme b pocket.

Belongs to the peroxidase family. Peroxidase/catalase subfamily. As to quaternary structure, homodimer or homotetramer. It depends on heme b as a cofactor. Formation of the three residue Trp-Tyr-Met cross-link is important for the catalase, but not the peroxidase activity of the enzyme.

The enzyme catalyses H2O2 + AH2 = A + 2 H2O. The catalysed reaction is 2 H2O2 = O2 + 2 H2O. Functionally, bifunctional enzyme with both catalase and broad-spectrum peroxidase activity. This chain is Catalase-peroxidase, found in Geobacter sp. (strain M21).